We begin with the raw amino-acid sequence, 190 residues long: UPF0149 protein NT01EI_3357 (190 aa).

The protein belongs to the UPF0149 family.

This chain is UPF0149 protein NT01EI_3357, found in Edwardsiella ictaluri (strain 93-146).